The chain runs to 440 residues: D-serine dehydratase (440 aa).

At lysine 116 the chain carries N6-(pyridoxal phosphate)lysine.

Belongs to the serine/threonine dehydratase family. DsdA subfamily. Monomer. Pyridoxal 5'-phosphate serves as cofactor.

It catalyses the reaction D-serine = pyruvate + NH4(+). In Salmonella paratyphi A (strain ATCC 9150 / SARB42), this protein is D-serine dehydratase.